The sequence spans 391 residues: Shewanella-like protein phosphatase 2 (391 aa).

Residues aspartate 61, histidine 63, aspartate 97, and asparagine 132 each contribute to the Mn(2+) site. Histidine 133 functions as the Proton donor in the catalytic mechanism. Residues histidine 232 and histidine 295 each contribute to the Mn(2+) site.

This sequence belongs to the metallophosphoesterase superfamily. SLP family. It depends on Mn(2+) as a cofactor. As to expression, expressed in roots and siliques (at protein level).

The protein resides in the cytoplasm. The protein localises to the cytosol. In terms of biological role, shows phosphatase activity, hydrolyzing the artificial substrate para-nitrophenylphosphate (pNPP) in vitro. This Arabidopsis thaliana (Mouse-ear cress) protein is Shewanella-like protein phosphatase 2.